The following is a 200-amino-acid chain: 3-isopropylmalate dehydratase small subunit (200 aa).

Belongs to the LeuD family. LeuD type 1 subfamily. In terms of assembly, heterodimer of LeuC and LeuD.

The enzyme catalyses (2R,3S)-3-isopropylmalate = (2S)-2-isopropylmalate. The protein operates within amino-acid biosynthesis; L-leucine biosynthesis; L-leucine from 3-methyl-2-oxobutanoate: step 2/4. Catalyzes the isomerization between 2-isopropylmalate and 3-isopropylmalate, via the formation of 2-isopropylmaleate. In Aliivibrio fischeri (strain MJ11) (Vibrio fischeri), this protein is 3-isopropylmalate dehydratase small subunit.